Here is a 267-residue protein sequence, read N- to C-terminus: S-adenosylmethionine decarboxylase proenzyme (267 aa).

Ser114 functions as the Schiff-base intermediate with substrate; via pyruvic acid in the catalytic mechanism. Ser114 carries the pyruvic acid (Ser); by autocatalysis modification. Residue His119 is the Proton acceptor; for processing activity of the active site. Cys142 acts as the Proton donor; for catalytic activity in catalysis.

Belongs to the prokaryotic AdoMetDC family. Type 2 subfamily. In terms of assembly, heterooctamer of four alpha and four beta chains arranged as a tetramer of alpha/beta heterodimers. Requires pyruvate as cofactor. Post-translationally, is synthesized initially as an inactive proenzyme. Formation of the active enzyme involves a self-maturation process in which the active site pyruvoyl group is generated from an internal serine residue via an autocatalytic post-translational modification. Two non-identical subunits are generated from the proenzyme in this reaction, and the pyruvate is formed at the N-terminus of the alpha chain, which is derived from the carboxyl end of the proenzyme. The post-translation cleavage follows an unusual pathway, termed non-hydrolytic serinolysis, in which the side chain hydroxyl group of the serine supplies its oxygen atom to form the C-terminus of the beta chain, while the remainder of the serine residue undergoes an oxidative deamination to produce ammonia and the pyruvoyl group blocking the N-terminus of the alpha chain.

The enzyme catalyses S-adenosyl-L-methionine + H(+) = S-adenosyl 3-(methylsulfanyl)propylamine + CO2. Its pathway is amine and polyamine biosynthesis; S-adenosylmethioninamine biosynthesis; S-adenosylmethioninamine from S-adenosyl-L-methionine: step 1/1. Catalyzes the decarboxylation of S-adenosylmethionine to S-adenosylmethioninamine (dcAdoMet), the propylamine donor required for the synthesis of the polyamines spermine and spermidine from the diamine putrescine. In Erwinia tasmaniensis (strain DSM 17950 / CFBP 7177 / CIP 109463 / NCPPB 4357 / Et1/99), this protein is S-adenosylmethionine decarboxylase proenzyme.